A 61-amino-acid polypeptide reads, in one-letter code: Large ribosomal subunit protein uL30 (61 aa).

The protein belongs to the universal ribosomal protein uL30 family. In terms of assembly, part of the 50S ribosomal subunit.

This chain is Large ribosomal subunit protein uL30, found in Clostridioides difficile (strain 630) (Peptoclostridium difficile).